The sequence spans 459 residues: Septin-4 (459 aa).

A phosphoserine mark is found at Ser10, Ser49, Ser98, and Ser99. Disordered regions lie at residues 18–52 (FVKD…SPDL) and 70–98 (SQQY…PYDS). The region spanning 122–395 (KGFDFTLMVA…ENYRAQCIQS (274 aa)) is the Septin-type G domain. The tract at residues 132–139 (GESGLGKS) is G1 motif. GTP is bound by residues 132 to 139 (GESGLGKS) and Thr166. The interval 189-192 (DTPG) is G3 motif. The G4 motif stretch occupies residues 270 to 273 (AKAD). Residue 271-279 (KADTLTPSE) participates in GTP binding. Ser306 bears the Phosphoserine mark. Positions 329 and 344 each coordinate GTP. Residues 410-430 (TRESGTDFPIPAVPPGTDPET) are disordered. Phosphoserine is present on Ser413. A Phosphothreonine modification is found at Thr415. Positions 434–459 (IREKDEELRRMQEMLHKIQRQMKETH) form a coiled coil.

It belongs to the TRAFAC class TrmE-Era-EngA-EngB-Septin-like GTPase superfamily. Septin GTPase family. Septins polymerize into heterooligomeric protein complexes that form filaments, and can associate with cellular membranes, actin filaments and microtubules. GTPase activity is required for filament formation. Interacts with SEPTIN8. Component of a septin core octameric complex consisting of SEPTIN12, SEPTIN7, SEPTIN6 and SEPTIN2 or SEPTIN4 in the order 12-7-6-2-2-6-7-12 or 12-7-6-4-4-6-7-12. Interacts with SEPTIN14 (via C-terminus). Interacts with DYRK1A. Interacts with SLC6A3/DAT and SNCA/alpha-synuclein. Interacts with STX1A; in the striatum. Interacts with XIAP (via BIR3 domain) following the induction of apoptosis. Interacts with AREL1 (via HECT domain); in the cytoplasm following induction of apoptosis. Phosphorylated by DYRK1A.

The protein resides in the cytoplasm. The protein localises to the cell projection. It is found in the cilium. Its subcellular location is the flagellum. It localises to the cytoplasmic vesicle. The protein resides in the secretory vesicle. The protein localises to the axon. It is found in the dendrite. Its subcellular location is the perikaryon. Functionally, filament-forming cytoskeletal GTPase. Pro-apoptotic protein involved in LGR5-positive intestinal stem cell and Paneth cell expansion in the intestines, via its interaction with XIAP. May also play a role in the regulation of cell fate in the intestine. Positive regulator of apoptosis involved in hematopoietic stem cell homeostasis; via its interaction with XIAP. Negative regulator of repair and hair follicle regeneration in response to injury, due to inhibition of hair follicle stem cell proliferation, potentially via its interaction with XIAP. Plays an important role in male fertility and sperm motility. During spermiogenesis, essential for the establishment of the annulus (a fibrous ring structure connecting the midpiece and the principal piece of the sperm flagellum) which is a requisite for the structural and mechanical integrity of the sperm. Involved in the migration of cortical neurons and the formation of neuron leading processes during embryonic development. Required for dopaminergic metabolism in presynaptic autoreceptors; potentially via activity as a presynaptic scaffold protein. The chain is Septin-4 from Rattus norvegicus (Rat).